Reading from the N-terminus, the 211-residue chain is 3-demethoxyubiquinol 3-hydroxylase (211 aa).

6 residues coordinate Fe cation: Glu-60, Glu-90, His-93, Glu-142, Glu-174, and His-177.

Belongs to the COQ7 family. Fe cation serves as cofactor.

It is found in the cell membrane. It catalyses the reaction a 5-methoxy-2-methyl-3-(all-trans-polyprenyl)benzene-1,4-diol + AH2 + O2 = a 3-demethylubiquinol + A + H2O. Its pathway is cofactor biosynthesis; ubiquinone biosynthesis. Catalyzes the hydroxylation of 2-nonaprenyl-3-methyl-6-methoxy-1,4-benzoquinol during ubiquinone biosynthesis. The sequence is that of 3-demethoxyubiquinol 3-hydroxylase from Acinetobacter baumannii (strain AB307-0294).